The following is a 467-amino-acid chain: Adenosylhomocysteinase (467 aa).

3 residues coordinate substrate: T68, D144, and E169. 170–172 contributes to the NAD(+) binding site; the sequence is TTT. Residues K199 and D203 each coordinate substrate. NAD(+) contacts are provided by residues N204, 233–238, E256, N305, 326–328, and N373; these read GYGDVG and IGH.

It belongs to the adenosylhomocysteinase family. NAD(+) is required as a cofactor.

Its subcellular location is the cytoplasm. The enzyme catalyses S-adenosyl-L-homocysteine + H2O = L-homocysteine + adenosine. The protein operates within amino-acid biosynthesis; L-homocysteine biosynthesis; L-homocysteine from S-adenosyl-L-homocysteine: step 1/1. May play a key role in the regulation of the intracellular concentration of adenosylhomocysteine. The polypeptide is Adenosylhomocysteinase (Acinetobacter baylyi (strain ATCC 33305 / BD413 / ADP1)).